We begin with the raw amino-acid sequence, 54 residues long: SFELTILHTNDVHARVEIINVGSEKSDDGRQVPVVQAYAFGIQLHNYSSQEIGK.

2 residues coordinate Zn(2+): Asp11 and His13. Asn46 carries N-linked (GlcNAc...) asparagine glycosylation.

Belongs to the 5'-nucleotidase family. Requires Zn(2+) as cofactor. Venom 5'-nucleotidases (or a part thereof) may be released into the venom via exosome-like vesicles. They may be attached via a GPI anchor to the membrane of these vesicles. Soluble forms of 5'-nucleotidase might be released by cleavage of the ectodomain in the exosome-like vesicles or venom gland cells. Expressed by the venom gland.

The protein resides in the membrane. It carries out the reaction a ribonucleoside 5'-phosphate + H2O = a ribonucleoside + phosphate. Hydrolyzes nucleotides into nucleosides. Snake venom 5'-nucleotidases are widely distributed among venomous snake taxa, but there is a lack of information about their biological activities. They have been shown to inhibit platelet aggregation. This effect may be due to the liberation of inhibitory AMP or adenosine by its action on ADP released upon initiation of aggregation. Venom 5'-nucleotidases are also known to synergistically act in vivo with other toxins like ADPases, phospholipases, and disintegrins to exert a more pronounced anti-coagulant effect. This Gloydius blomhoffii blomhoffii (Japanese mamushi) protein is Snake venom 5'-nucleotidase.